We begin with the raw amino-acid sequence, 647 residues long: DNA ligase (647 aa).

NAD(+) is bound by residues 30–34, 79–80, and Glu106; these read DEEYD and SM. Lys108 serves as the catalytic N6-AMP-lysine intermediate. Residues Arg129, Glu163, and Lys301 each contribute to the NAD(+) site. Residues Cys395, Cys398, Cys411, and Cys416 each contribute to the Zn(2+) site. The BRCT domain maps to 569-647; that stretch reads SISNALSGKT…SEYERLKLEV (79 aa).

The protein belongs to the NAD-dependent DNA ligase family. LigA subfamily. Requires Mg(2+) as cofactor. The cofactor is Mn(2+).

The catalysed reaction is NAD(+) + (deoxyribonucleotide)n-3'-hydroxyl + 5'-phospho-(deoxyribonucleotide)m = (deoxyribonucleotide)n+m + AMP + beta-nicotinamide D-nucleotide.. Its function is as follows. DNA ligase that catalyzes the formation of phosphodiester linkages between 5'-phosphoryl and 3'-hydroxyl groups in double-stranded DNA using NAD as a coenzyme and as the energy source for the reaction. It is essential for DNA replication and repair of damaged DNA. This chain is DNA ligase, found in Campylobacter concisus (strain 13826).